A 376-amino-acid polypeptide reads, in one-letter code: MTYLMNNYARLPVKFVRGKGVYLYDEEGKEYLDFVSGIGVNSLGHAYPKLTEALKEQVEKLLHVSNLYENPWQEELAHKLVKHFWTEGKVFFANSGTESVEAAIKLARKYWRDKGKNKWKFISFENSFHGRTYGSLSATGQPKFHKGFEPLVPGFSYAKLNDIDSVYKLLDEETAGIIIEVIQGEGGVNEASEDFLSKLQEICKEKDVLLIIDEVQTGIGRTGEFYAYQHFNLKPDVIALAKGLGGGVPIGAILAREEVAQSFTPGSHGSTFGGNPLACRAGTVVVDEVEKLLPHVREVGNYFKEKLKELGKGKVKGRGLMLGLELERECKDYVLKALEKGLLINCTAGKVLRFLPPLIIQKEHIDRAISVLREIL.

Pyridoxal 5'-phosphate is bound by residues 96 to 97 and Phe-128; that span reads GT. Arg-131 is a binding site for N(2)-acetyl-L-ornithine. 213 to 216 contributes to the pyridoxal 5'-phosphate binding site; that stretch reads DEVQ. Lys-242 bears the N6-(pyridoxal phosphate)lysine mark. Ser-270 is a N(2)-acetyl-L-ornithine binding site. Thr-271 is a pyridoxal 5'-phosphate binding site.

This sequence belongs to the class-III pyridoxal-phosphate-dependent aminotransferase family. ArgD subfamily. Homodimer. It depends on pyridoxal 5'-phosphate as a cofactor.

The protein localises to the cytoplasm. It carries out the reaction N(2)-acetyl-L-ornithine + 2-oxoglutarate = N-acetyl-L-glutamate 5-semialdehyde + L-glutamate. It participates in amino-acid biosynthesis; L-arginine biosynthesis; N(2)-acetyl-L-ornithine from L-glutamate: step 4/4. This Aquifex aeolicus (strain VF5) protein is Acetylornithine aminotransferase.